A 243-amino-acid polypeptide reads, in one-letter code: 1-(5-phosphoribosyl)-5-[(5-phosphoribosylamino)methylideneamino] imidazole-4-carboxamide isomerase (243 aa).

The active-site Proton acceptor is D8. Residue D129 is the Proton donor of the active site.

This sequence belongs to the HisA/HisF family.

It is found in the cytoplasm. The enzyme catalyses 1-(5-phospho-beta-D-ribosyl)-5-[(5-phospho-beta-D-ribosylamino)methylideneamino]imidazole-4-carboxamide = 5-[(5-phospho-1-deoxy-D-ribulos-1-ylimino)methylamino]-1-(5-phospho-beta-D-ribosyl)imidazole-4-carboxamide. The protein operates within amino-acid biosynthesis; L-histidine biosynthesis; L-histidine from 5-phospho-alpha-D-ribose 1-diphosphate: step 4/9. This Brucella abortus (strain 2308) protein is 1-(5-phosphoribosyl)-5-[(5-phosphoribosylamino)methylideneamino] imidazole-4-carboxamide isomerase.